The primary structure comprises 645 residues: Translation factor GUF1, mitochondrial (645 aa).

The tr-type G domain occupies 44–228 (ENYRNFSIVA…AIIDRIPPPT (185 aa)). GTP contacts are provided by residues 53 to 60 (AHVDHGKS), 120 to 124 (DTPGH), and 174 to 177 (NKID).

The protein belongs to the TRAFAC class translation factor GTPase superfamily. Classic translation factor GTPase family. LepA subfamily.

The protein resides in the mitochondrion inner membrane. The enzyme catalyses GTP + H2O = GDP + phosphate + H(+). Its function is as follows. Promotes mitochondrial protein synthesis. May act as a fidelity factor of the translation reaction, by catalyzing a one-codon backward translocation of tRNAs on improperly translocated ribosomes. Binds to mitochondrial ribosomes in a GTP-dependent manner. The chain is Translation factor GUF1, mitochondrial from Saccharomyces cerevisiae (strain RM11-1a) (Baker's yeast).